Here is a 138-residue protein sequence, read N- to C-terminus: Small ribosomal subunit protein uS11c (138 aa).

Residues methionine 1–alanine 22 form a disordered region. Basic residues predominate over residues glycine 9–alanine 22.

The protein belongs to the universal ribosomal protein uS11 family. Part of the 30S ribosomal subunit.

The protein localises to the plastid. It is found in the chloroplast. The sequence is that of Small ribosomal subunit protein uS11c from Dioscorea elephantipes (Elephant's foot yam).